A 250-amino-acid polypeptide reads, in one-letter code: 2,3-bisphosphoglycerate-dependent phosphoglycerate mutase (250 aa).

Residues 10–17 (RHGESQWN), 23–24 (TG), Arg62, 89–92 (ERHY), Lys100, 116–117 (RR), and 185–186 (GN) contribute to the substrate site. Residue His11 is the Tele-phosphohistidine intermediate of the active site. Glu89 acts as the Proton donor/acceptor in catalysis.

This sequence belongs to the phosphoglycerate mutase family. BPG-dependent PGAM subfamily. Homodimer.

It catalyses the reaction (2R)-2-phosphoglycerate = (2R)-3-phosphoglycerate. It participates in carbohydrate degradation; glycolysis; pyruvate from D-glyceraldehyde 3-phosphate: step 3/5. Catalyzes the interconversion of 2-phosphoglycerate and 3-phosphoglycerate. The protein is 2,3-bisphosphoglycerate-dependent phosphoglycerate mutase of Shigella boydii serotype 4 (strain Sb227).